Consider the following 196-residue polypeptide: Imidazoleglycerol-phosphate dehydratase (196 aa).

This sequence belongs to the imidazoleglycerol-phosphate dehydratase family.

It localises to the cytoplasm. The enzyme catalyses D-erythro-1-(imidazol-4-yl)glycerol 3-phosphate = 3-(imidazol-4-yl)-2-oxopropyl phosphate + H2O. It functions in the pathway amino-acid biosynthesis; L-histidine biosynthesis; L-histidine from 5-phospho-alpha-D-ribose 1-diphosphate: step 6/9. This chain is Imidazoleglycerol-phosphate dehydratase, found in Desulfitobacterium hafniense (strain Y51).